Here is a 370-residue protein sequence, read N- to C-terminus: tRNA-specific 2-thiouridylase MnmA (370 aa).

ATP contacts are provided by residues 19–26 (AMSGGVDS) and Leu45. Cys113 functions as the Nucleophile in the catalytic mechanism. A disulfide bridge connects residues Cys113 and Cys209. Gly137 serves as a coordination point for ATP. The interval 159–161 (KDQ) is interaction with tRNA. Cys209 serves as the catalytic Cysteine persulfide intermediate.

It belongs to the MnmA/TRMU family.

Its subcellular location is the cytoplasm. It carries out the reaction S-sulfanyl-L-cysteinyl-[protein] + uridine(34) in tRNA + AH2 + ATP = 2-thiouridine(34) in tRNA + L-cysteinyl-[protein] + A + AMP + diphosphate + H(+). In terms of biological role, catalyzes the 2-thiolation of uridine at the wobble position (U34) of tRNA, leading to the formation of s(2)U34. The chain is tRNA-specific 2-thiouridylase MnmA from Rickettsia conorii (strain ATCC VR-613 / Malish 7).